Reading from the N-terminus, the 290-residue chain is 33 kDa chaperonin (290 aa).

2 disulfide bridges follow: cysteine 235–cysteine 237 and cysteine 268–cysteine 271.

Belongs to the HSP33 family. Post-translationally, under oxidizing conditions two disulfide bonds are formed involving the reactive cysteines. Under reducing conditions zinc is bound to the reactive cysteines and the protein is inactive.

Its subcellular location is the cytoplasm. Functionally, redox regulated molecular chaperone. Protects both thermally unfolding and oxidatively damaged proteins from irreversible aggregation. Plays an important role in the bacterial defense system toward oxidative stress. The sequence is that of 33 kDa chaperonin from Streptococcus equi subsp. zooepidemicus (strain H70).